The sequence spans 217 residues: Ras-related protein Rab-19 (217 aa).

11 residues coordinate GTP: S26, V28, G29, K30, T31, C32, Y42, S43, E44, S45, and T49. T31 serves as a coordination point for Mg(2+). Positions 39–54 (SGVYSESQQNTIGVDF) match the Switch 1 motif. The Mg(2+) site is built by T49 and D72. Positions 74–89 (AGQERFRTITQSYYRS) match the Switch 2 motif. GTP contacts are provided by G75, N130, K131, D133, S161, A162, and K163. Residues C215 and C217 are each lipidated (S-geranylgeranyl cysteine). C217 carries the post-translational modification Cysteine methyl ester.

Belongs to the small GTPase superfamily. Rab family. It depends on Mg(2+) as a cofactor. Expressed in a tissue-specific manner. Detected at high levels in intestine, lung and spleen, and at a lower level in kidney.

It localises to the cell membrane. It catalyses the reaction GTP + H2O = GDP + phosphate + H(+). Its activity is regulated as follows. Regulated by guanine nucleotide exchange factors (GEFs) which promote the exchange of bound GDP for free GTP. Regulated by GTPase activating proteins (GAPs) which increase the GTP hydrolysis activity. Inhibited by GDP dissociation inhibitors (GDIs). In terms of biological role, the small GTPases Rab are key regulators of intracellular membrane trafficking, from the formation of transport vesicles to their fusion with membranes. Rabs cycle between an inactive GDP-bound form and an active GTP-bound form that is able to recruit to membranes different set of downstream effectors directly responsible for vesicle formation, movement, tethering and fusion. In Mus musculus (Mouse), this protein is Ras-related protein Rab-19.